The sequence spans 547 residues: CTP synthase (547 aa).

The amidoligase domain stretch occupies residues 1-265 (MARYVFITGG…DQAVLDAFGI (265 aa)). Ser13 is a binding site for CTP. Residue Ser13 coordinates UTP. Residues 14-19 (SLGKGL) and Asp71 contribute to the ATP site. Residues Asp71 and Glu139 each contribute to the Mg(2+) site. CTP is bound by residues 146–148 (DIE), 186–191 (KTKPTQ), and Lys222. UTP is bound by residues 186 to 191 (KTKPTQ) and Lys222. Positions 291 to 546 (RVAIVGKYTQ…VRAAVEVSRL (256 aa)) constitute a Glutamine amidotransferase type-1 domain. Gly353 contributes to the L-glutamine binding site. Cys380 functions as the Nucleophile; for glutamine hydrolysis in the catalytic mechanism. L-glutamine is bound by residues 381–384 (LGMQ), Glu404, and Arg474. Residues His519 and Glu521 contribute to the active site.

It belongs to the CTP synthase family. In terms of assembly, homotetramer.

The catalysed reaction is UTP + L-glutamine + ATP + H2O = CTP + L-glutamate + ADP + phosphate + 2 H(+). The enzyme catalyses L-glutamine + H2O = L-glutamate + NH4(+). It carries out the reaction UTP + NH4(+) + ATP = CTP + ADP + phosphate + 2 H(+). It functions in the pathway pyrimidine metabolism; CTP biosynthesis via de novo pathway; CTP from UDP: step 2/2. With respect to regulation, allosterically activated by GTP, when glutamine is the substrate; GTP has no effect on the reaction when ammonia is the substrate. The allosteric effector GTP functions by stabilizing the protein conformation that binds the tetrahedral intermediate(s) formed during glutamine hydrolysis. Inhibited by the product CTP, via allosteric rather than competitive inhibition. Its function is as follows. Catalyzes the ATP-dependent amination of UTP to CTP with either L-glutamine or ammonia as the source of nitrogen. Regulates intracellular CTP levels through interactions with the four ribonucleotide triphosphates. The protein is CTP synthase of Cereibacter sphaeroides (strain ATCC 17029 / ATH 2.4.9) (Rhodobacter sphaeroides).